The chain runs to 99 residues: Protein Tat (99 aa).

The disordered stretch occupies residues 1–20 (MEPVDPNIEPWNQPGSQPKT). Positions 1 to 24 (MEPVDPNIEPWNQPGSQPKTACNQ) are interaction with human CREBBP. The interval 1–48 (MEPVDPNIEPWNQPGSQPKTACNQCYCKKCCYHCQLCFLQKGLGICYG) is transactivation. 3 residues coordinate Zn(2+): C22, C25, and C27. The interval 22–37 (CNQCYCKKCCYHCQLC) is cysteine-rich. Position 28 is an N6-acetyllysine; by host PCAF (K28). C30, H33, C34, and C37 together coordinate Zn(2+). The interval 38 to 48 (FLQKGLGICYG) is core. The short motif at 49-57 (REKRRQRTT) is the Nuclear localization signal, RNA-binding (TAR), and protein transduction element. The interaction with the host capping enzyme RNGTT stretch occupies residues 49–86 (REKRRQRTTTPYASKNHKDPIPKQPLPQARGDPTGPKE). K51 is modified (N6-acetyllysine; by host EP300 and GCN5L2). Asymmetric dimethylarginine; by host PRMT6 is present on residues R52 and R53. A disordered region spans residues 54–99 (QRTTTPYASKNHKDPIPKQPLPQARGDPTGPKESKKEVESKTKTDP). K71 is covalently cross-linked (Glycyl lysine isopeptide (Lys-Gly) (interchain with G-Cter in ubiquitin)). A Cell attachment site motif is present at residues 78–80 (RGD). Positions 83-99 (GPKESKKEVESKTKTDP) are enriched in basic and acidic residues.

It belongs to the lentiviruses Tat family. Interacts with host CCNT1. Associates with the P-TEFb complex composed at least of Tat, P-TEFb (CDK9 and CCNT1), TAR RNA, RNA Pol II. Recruits the HATs CREBBP, TAF1/TFIID, EP300, PCAF and GCN5L2. Interacts with host KAT5/Tip60; this interaction targets the latter to degradation. Interacts with the host deacetylase SIRT1. Interacts with host capping enzyme RNGTT; this interaction stimulates RNGTT. Binds to host KDR, and to the host integrins ITGAV/ITGB3 and ITGA5/ITGB1. Interacts with host KPNB1/importin beta-1 without previous binding to KPNA1/importin alpha-1. Interacts with EIF2AK2. Interacts with host nucleosome assembly protein NAP1L1; this interaction may be required for the transport of Tat within the nucleus, since the two proteins interact at the nuclear rim. Interacts with host C1QBP/SF2P32; this interaction involves lysine-acetylated Tat. Interacts with the host chemokine receptors CCR2, CCR3 and CXCR4. Interacts with host DPP4/CD26; this interaction may trigger an anti-proliferative effect. Interacts with host LDLR. Interacts with the host extracellular matrix metalloproteinase MMP1. Interacts with host PRMT6; this interaction mediates Tat's methylation. Interacts with, and is ubiquitinated by MDM2/Hdm2. Interacts with host PSMC3 and HTATIP2. Interacts with STAB1; this interaction may overcome SATB1-mediated repression of IL2 and IL2RA (interleukin) in T cells by binding to the same domain than HDAC1. Interacts (when acetylated) with human CDK13, thereby increasing HIV-1 mRNA splicing and promoting the production of the doubly spliced HIV-1 protein Nef. Interacts with host TBP; this interaction modulates the activity of transcriptional pre-initiation complex. Interacts with host RELA. Interacts with host PLSCR1; this interaction negatively regulates Tat transactivation activity by altering its subcellular distribution. Asymmetrical arginine methylation by host PRMT6 seems to diminish the transactivation capacity of Tat and affects the interaction with host CCNT1. In terms of processing, acetylation by EP300, CREBBP, GCN5L2/GCN5 and PCAF regulates the transactivation activity of Tat. EP300-mediated acetylation of Lys-50 promotes dissociation of Tat from the TAR RNA through the competitive binding to PCAF's bromodomain. In addition, the non-acetylated Tat's N-terminus can also interact with PCAF. PCAF-mediated acetylation of Lys-28 enhances Tat's binding to CCNT1. Lys-50 is deacetylated by SIRT1. Post-translationally, polyubiquitination by host MDM2 does not target Tat to degradation, but activates its transactivation function and fosters interaction with CCNT1 and TAR RNA. Phosphorylated by EIF2AK2 on serine and threonine residues adjacent to the basic region important for TAR RNA binding and function. Phosphorylation of Tat by EIF2AK2 is dependent on the prior activation of EIF2AK2 by dsRNA.

The protein localises to the host nucleus. It is found in the host nucleolus. It localises to the host cytoplasm. The protein resides in the secreted. Its function is as follows. Transcriptional activator that increases RNA Pol II processivity, thereby increasing the level of full-length viral transcripts. Recognizes a hairpin structure at the 5'-LTR of the nascent viral mRNAs referred to as the transactivation responsive RNA element (TAR) and recruits the cyclin T1-CDK9 complex (P-TEFb complex) that will in turn hyperphosphorylate the RNA polymerase II to allow efficient elongation. The CDK9 component of P-TEFb and other Tat-activated kinases hyperphosphorylate the C-terminus of RNA Pol II that becomes stabilized and much more processive. Other factors such as HTATSF1/Tat-SF1, SUPT5H/SPT5, and HTATIP2 are also important for Tat's function. Besides its effect on RNA Pol II processivity, Tat induces chromatin remodeling of proviral genes by recruiting the histone acetyltransferases (HATs) CREBBP, EP300 and PCAF to the chromatin. This also contributes to the increase in proviral transcription rate, especially when the provirus integrates in transcriptionally silent region of the host genome. To ensure maximal activation of the LTR, Tat mediates nuclear translocation of NF-kappa-B by interacting with host RELA. Through its interaction with host TBP, Tat may also modulate transcription initiation. Tat can reactivate a latently infected cell by penetrating in it and transactivating its LTR promoter. In the cytoplasm, Tat is thought to act as a translational activator of HIV-1 mRNAs. In terms of biological role, extracellular circulating Tat can be endocytosed by surrounding uninfected cells via the binding to several surface receptors such as CD26, CXCR4, heparan sulfate proteoglycans (HSPG) or LDLR. Neurons are rarely infected, but they internalize Tat via their LDLR. Through its interaction with nuclear HATs, Tat is potentially able to control the acetylation-dependent cellular gene expression. Modulates the expression of many cellular genes involved in cell survival, proliferation or in coding for cytokines or cytokine receptors. Tat plays a role in T-cell and neurons apoptosis. Tat induced neurotoxicity and apoptosis probably contribute to neuroAIDS. Circulating Tat also acts as a chemokine-like and/or growth factor-like molecule that binds to specific receptors on the surface of the cells, affecting many cellular pathways. In the vascular system, Tat binds to ITGAV/ITGB3 and ITGA5/ITGB1 integrins dimers at the surface of endothelial cells and competes with bFGF for heparin-binding sites, leading to an excess of soluble bFGF. The chain is Protein Tat from Homo sapiens (Human).